The following is a 348-amino-acid chain: Endoglucanase-6B (348 aa).

Substrate is bound by residues Trp52 and Ser54. Residues Asp92 and Asp139 each act as proton donor in the active site. Asn183, Trp186, Asn222, Trp282, Lys310, and Glu314 together coordinate substrate. Over residues 222–241 the composition is skewed to low complexity; the sequence is NYNPYSTSNPPPYTSGSPSP. The segment at 222 to 244 is disordered; that stretch reads NYNPYSTSNPPPYTSGSPSPDES.

The protein belongs to the glycosyl hydrolase 6 (cellulase B) family. Monomer.

It catalyses the reaction Endohydrolysis of (1-&gt;4)-beta-D-glucosidic linkages in cellulose, lichenin and cereal beta-D-glucans.. Plays a central role in the recycling of plant biomass. The biological conversion of cellulose to glucose generally requires three types of hydrolytic enzymes: (1) Endoglucanases which cut internal beta-1,4-glucosidic bonds; (2) Exocellobiohydrolases that cut the disaccharide cellobiose from the non-reducing end of the cellulose polymer chain; (3) Beta-1,4-glucosidases which hydrolyze the cellobiose and other short cello-oligosaccharides to glucose. This chain is Endoglucanase-6B, found in Humicola insolens (Soft-rot fungus).